We begin with the raw amino-acid sequence, 481 residues long: 3-isopropylmalate dehydratase large subunit (481 aa).

The [4Fe-4S] cluster site is built by cysteine 363, cysteine 423, and cysteine 426. The tract at residues 437 to 463 is disordered; that stretch reads GQRAASTSNRNFEGRQGRGGRTHLVSP.

This sequence belongs to the aconitase/IPM isomerase family. LeuC type 1 subfamily. As to quaternary structure, heterodimer of LeuC and LeuD. The cofactor is [4Fe-4S] cluster.

The catalysed reaction is (2R,3S)-3-isopropylmalate = (2S)-2-isopropylmalate. It participates in amino-acid biosynthesis; L-leucine biosynthesis; L-leucine from 3-methyl-2-oxobutanoate: step 2/4. Its function is as follows. Catalyzes the isomerization between 2-isopropylmalate and 3-isopropylmalate, via the formation of 2-isopropylmaleate. The polypeptide is 3-isopropylmalate dehydratase large subunit (Salinispora arenicola (strain CNS-205)).